A 273-amino-acid chain; its full sequence is Dermonecrotic toxin LdSicTox-alphaIB3aii (273 aa).

Residue H5 is part of the active site. Positions 25 and 27 each coordinate Mg(2+). H41 functions as the Nucleophile in the catalytic mechanism. 2 disulfide bridges follow: C45–C51 and C47–C190. D85 provides a ligand contact to Mg(2+).

This sequence belongs to the arthropod phospholipase D family. Class II subfamily. It depends on Mg(2+) as a cofactor. In terms of tissue distribution, expressed by the venom gland.

It is found in the secreted. It catalyses the reaction an N-(acyl)-sphingosylphosphocholine = an N-(acyl)-sphingosyl-1,3-cyclic phosphate + choline. The catalysed reaction is an N-(acyl)-sphingosylphosphoethanolamine = an N-(acyl)-sphingosyl-1,3-cyclic phosphate + ethanolamine. The enzyme catalyses a 1-acyl-sn-glycero-3-phosphocholine = a 1-acyl-sn-glycero-2,3-cyclic phosphate + choline. It carries out the reaction a 1-acyl-sn-glycero-3-phosphoethanolamine = a 1-acyl-sn-glycero-2,3-cyclic phosphate + ethanolamine. Its function is as follows. Dermonecrotic toxins cleave the phosphodiester linkage between the phosphate and headgroup of certain phospholipids (sphingolipid and lysolipid substrates), forming an alcohol (often choline) and a cyclic phosphate. This toxin acts on sphingomyelin (SM). It may also act on ceramide phosphoethanolamine (CPE), lysophosphatidylcholine (LPC) and lysophosphatidylethanolamine (LPE), but not on lysophosphatidylserine (LPS), and lysophosphatidylglycerol (LPG). It acts by transphosphatidylation, releasing exclusively cyclic phosphate products as second products. Induces dermonecrosis, hemolysis, increased vascular permeability, edema, inflammatory response, and platelet aggregation. The polypeptide is Dermonecrotic toxin LdSicTox-alphaIB3aii (Loxosceles deserta (Desert recluse spider)).